Consider the following 61-residue polypeptide: Large ribosomal subunit protein bL32 (61 aa).

The interval 1–44 is disordered; it reads MAVQQNRKSRSRRDMRRSHDALTENALTVDQATGETHRRHHVTK. A compositionally biased stretch (basic residues) spans 7 to 16; the sequence is RKSRSRRDMR. Residues 25–34 are compositionally biased toward polar residues; the sequence is NALTVDQATG.

It belongs to the bacterial ribosomal protein bL32 family.

The protein is Large ribosomal subunit protein bL32 of Acinetobacter baumannii (strain AB307-0294).